Reading from the N-terminus, the 557-residue chain is Dihydroxy-acid dehydratase (557 aa).

D78 is a binding site for Mg(2+). C119 contributes to the [2Fe-2S] cluster binding site. 2 residues coordinate Mg(2+): D120 and K121. Residue K121 is modified to N6-carboxylysine. [2Fe-2S] cluster is bound at residue C191. Residue E442 participates in Mg(2+) binding. Residue S468 is the Proton acceptor of the active site.

This sequence belongs to the IlvD/Edd family. Homodimer. The cofactor is [2Fe-2S] cluster. It depends on Mg(2+) as a cofactor.

It carries out the reaction (2R)-2,3-dihydroxy-3-methylbutanoate = 3-methyl-2-oxobutanoate + H2O. The enzyme catalyses (2R,3R)-2,3-dihydroxy-3-methylpentanoate = (S)-3-methyl-2-oxopentanoate + H2O. Its pathway is amino-acid biosynthesis; L-isoleucine biosynthesis; L-isoleucine from 2-oxobutanoate: step 3/4. The protein operates within amino-acid biosynthesis; L-valine biosynthesis; L-valine from pyruvate: step 3/4. Its function is as follows. Functions in the biosynthesis of branched-chain amino acids. Catalyzes the dehydration of (2R,3R)-2,3-dihydroxy-3-methylpentanoate (2,3-dihydroxy-3-methylvalerate) into 2-oxo-3-methylpentanoate (2-oxo-3-methylvalerate) and of (2R)-2,3-dihydroxy-3-methylbutanoate (2,3-dihydroxyisovalerate) into 2-oxo-3-methylbutanoate (2-oxoisovalerate), the penultimate precursor to L-isoleucine and L-valine, respectively. The polypeptide is Dihydroxy-acid dehydratase (Lachnospira eligens (strain ATCC 27750 / DSM 3376 / VPI C15-48 / C15-B4) (Eubacterium eligens)).